The following is a 236-amino-acid chain: Phycocyanobilin:ferredoxin oxidoreductase (236 aa).

This sequence belongs to the HY2 family.

It catalyses the reaction (2R,3Z)-phycocyanobilin + 4 oxidized [2Fe-2S]-[ferredoxin] = biliverdin IXalpha + 4 reduced [2Fe-2S]-[ferredoxin] + 4 H(+). In terms of biological role, catalyzes the four-electron reduction of biliverdin IX-alpha (2-electron reduction at both the A and D rings); the reaction proceeds via an isolatable 2-electron intermediate, 181,182-dihydrobiliverdin. The chain is Phycocyanobilin:ferredoxin oxidoreductase (pcyA) from Thermosynechococcus vestitus (strain NIES-2133 / IAM M-273 / BP-1).